We begin with the raw amino-acid sequence, 551 residues long: Methionine--tRNA ligase (551 aa).

The 'HIGH' region motif lies at 12 to 22; the sequence is PYANGPLHFGH. The Zn(2+) site is built by Cys-144, Cys-147, Cys-157, and Cys-160. The short motif at 330–334 is the 'KMSKS' region element; that stretch reads QFSKS. An ATP-binding site is contributed by Lys-333.

It belongs to the class-I aminoacyl-tRNA synthetase family. MetG type 1 subfamily. As to quaternary structure, monomer. It depends on Zn(2+) as a cofactor.

The protein resides in the cytoplasm. The catalysed reaction is tRNA(Met) + L-methionine + ATP = L-methionyl-tRNA(Met) + AMP + diphosphate. In terms of biological role, is required not only for elongation of protein synthesis but also for the initiation of all mRNA translation through initiator tRNA(fMet) aminoacylation. This Chlamydia pneumoniae (Chlamydophila pneumoniae) protein is Methionine--tRNA ligase (metG).